Consider the following 407-residue polypeptide: MKYDNLLDRFIKYVKVNTRSDPDSETTPSTESQEAFALTILKPEMEAIGLQDVHYNPVNGYLIGTLPANNPTLTRKIGFIAHMDTADFNADNVNPQIIDNYQGGDITLGSSNYKLDPKAFPNLNNYIGQTLITTDGTTLLGADDKSGIAEIMTAIEFLTSQPQIEHCDIKVAFGPDEEIGVGADKFEVADFEVDFAYTMDGGPLGELQYETFSAAALEVTFLGRNVHPGTAKDQMINALQLAIDFHEKLPAKERPEYTDGYQGFYHLTGLTGTVEEARASYIIRDFEEASFEARKVKVENIAQSMNAQLGTKRVLVELNDQYYNMKKVIEKDMTAIELAKEVMEELTIKPVIEPIRGGTDGSKISFMGIPTPNIFAGGENMHGRFEFVSLQTMERAVDVIIGLVCKA.

Residue H82 participates in Zn(2+) binding. D84 is an active-site residue. Residue D143 coordinates Zn(2+). E177 serves as the catalytic Proton acceptor. 3 residues coordinate Zn(2+): E178, D200, and H382.

It belongs to the peptidase M20B family. The cofactor is Zn(2+).

The protein localises to the cytoplasm. It carries out the reaction Release of the N-terminal residue from a tripeptide.. Its function is as follows. Cleaves the N-terminal amino acid of tripeptides. The polypeptide is Peptidase T (Streptococcus pyogenes serotype M18 (strain MGAS8232)).